Reading from the N-terminus, the 131-residue chain is Protein DfrA (131 aa).

Belongs to the RutC family.

In Myxococcus xanthus, this protein is Protein DfrA (dfrA).